Consider the following 257-residue polypeptide: Imidazole glycerol phosphate synthase subunit HisF (257 aa).

Catalysis depends on residues aspartate 11 and aspartate 130.

It belongs to the HisA/HisF family. As to quaternary structure, heterodimer of HisH and HisF.

It is found in the cytoplasm. It catalyses the reaction 5-[(5-phospho-1-deoxy-D-ribulos-1-ylimino)methylamino]-1-(5-phospho-beta-D-ribosyl)imidazole-4-carboxamide + L-glutamine = D-erythro-1-(imidazol-4-yl)glycerol 3-phosphate + 5-amino-1-(5-phospho-beta-D-ribosyl)imidazole-4-carboxamide + L-glutamate + H(+). It participates in amino-acid biosynthesis; L-histidine biosynthesis; L-histidine from 5-phospho-alpha-D-ribose 1-diphosphate: step 5/9. In terms of biological role, IGPS catalyzes the conversion of PRFAR and glutamine to IGP, AICAR and glutamate. The HisF subunit catalyzes the cyclization activity that produces IGP and AICAR from PRFAR using the ammonia provided by the HisH subunit. The sequence is that of Imidazole glycerol phosphate synthase subunit HisF from Shewanella woodyi (strain ATCC 51908 / MS32).